A 70-amino-acid chain; its full sequence is Movement protein TGBp3 (70 aa).

The Lumenal segment spans residues M1–G4. The helical transmembrane segment at A5–T27 threads the bilayer. At R28–Q70 the chain is on the cytoplasmic side.

This sequence belongs to the Tymovirales TGBp3 protein family.

The protein localises to the host endoplasmic reticulum membrane. Functionally, plays a role in viral cell-to-cell propagation, by facilitating genome transport to neighboring plant cells through plasmosdesmata. May induce the formation of granular vesicles derived from the Endoplasmic reticulum, which align on actin filaments. The sequence is that of Movement protein TGBp3 from Potato virus X (strain CP) (PVX).